Here is an 826-residue protein sequence, read N- to C-terminus: Zinc phosphodiesterase ELAC protein 2 (826 aa).

A mitochondrion-targeting transit peptide spans 1-16; that stretch reads MWALCSLLRSAAGRTM. Disordered stretches follow at residues 16 to 51 and 188 to 231; these read MSQG…PSGC and EQRR…VSQR. The span at 27–38 shows a compositional bias: basic and acidic residues; sequence ARRERPRKDPLR. S199, S208, S212, S229, S618, and S736 each carry phosphoserine. Residues 208 to 224 show a composition bias toward basic and acidic residues; it reads SPERSSDSESNENEPHL. Residues 798–826 form a disordered region; it reads ELAGGLEDGEPQQKRAHTEEPQAKKVRAQ. Basic and acidic residues predominate over residues 808 to 820; that stretch reads PQQKRAHTEEPQA.

The protein belongs to the RNase Z family. Homodimer. Interacts with PTCD1. Zn(2+) is required as a cofactor.

The protein resides in the mitochondrion. Its subcellular location is the mitochondrion matrix. It localises to the mitochondrion nucleoid. The protein localises to the nucleus. It carries out the reaction Endonucleolytic cleavage of RNA, removing extra 3' nucleotides from tRNA precursor, generating 3' termini of tRNAs. A 3'-hydroxy group is left at the tRNA terminus and a 5'-phosphoryl group is left at the trailer molecule.. Its function is as follows. Zinc phosphodiesterase, which displays mitochondrial tRNA 3'-processing endonuclease activity. Involved in tRNA maturation, by removing a 3'-trailer from precursor tRNA. Associates with mitochondrial DNA complexes at the nucleoids to initiate RNA processing and ribosome assembly. In Pan troglodytes (Chimpanzee), this protein is Zinc phosphodiesterase ELAC protein 2 (ELAC2).